Reading from the N-terminus, the 256-residue chain is 5-oxoprolinase subunit A (256 aa).

Belongs to the LamB/PxpA family. Forms a complex composed of PxpA, PxpB and PxpC.

It carries out the reaction 5-oxo-L-proline + ATP + 2 H2O = L-glutamate + ADP + phosphate + H(+). Its function is as follows. Catalyzes the cleavage of 5-oxoproline to form L-glutamate coupled to the hydrolysis of ATP to ADP and inorganic phosphate. In Cutibacterium acnes (strain DSM 16379 / KPA171202) (Propionibacterium acnes), this protein is 5-oxoprolinase subunit A.